The chain runs to 602 residues: Beta-(1--&gt;2)glucan export ATP-binding/permease protein NdvA (602 aa).

The 286-residue stretch at 21–306 (GWLLAFANLL…VVSFINNVFM (286 aa)) folds into the ABC transmembrane type-1 domain. 6 consecutive transmembrane segments (helical) span residues 22 to 42 (WLLA…PVLF), 63 to 83 (FLAA…LVAL), 141 to 161 (EHFA…YLNW), 163 to 183 (LAIL…FVVR), 240 to 262 (VLSW…VLAI), and 280 to 300 (IVMF…VVSF). The region spanning 340 to 573 (VEFNDVTFSY…GGHFAELARA (234 aa)) is the ABC transporter domain. Residue 373-380 (GPTGAGKS) participates in ATP binding.

Belongs to the ABC transporter superfamily. Beta-(1--&gt;2)glucan exporter (TC 3.A.1.108.1) family. Homodimer.

The protein resides in the cell inner membrane. It catalyses the reaction [(1-&gt;2)-beta-D-glucosyl](n)(in) + ATP + H2O = [(1-&gt;2)-beta-D-glucosyl](n)(out) + ADP + phosphate + H(+). Involved in beta-(1--&gt;2)glucan export. Transmembrane domains (TMD) form a pore in the inner membrane and the ATP-binding domain (NBD) is responsible for energy generation. The protein is Beta-(1--&gt;2)glucan export ATP-binding/permease protein NdvA of Bradyrhizobium diazoefficiens (strain JCM 10833 / BCRC 13528 / IAM 13628 / NBRC 14792 / USDA 110).